The chain runs to 356 residues: tRNA N6-adenosine threonylcarbamoyltransferase (356 aa).

His-115 and His-119 together coordinate Fe cation. Substrate-binding positions include Leu-138–Gly-142, Asp-171, Gly-184, and Asn-283. Asp-311 contributes to the Fe cation binding site.

Belongs to the KAE1 / TsaD family. Fe(2+) serves as cofactor.

It localises to the cytoplasm. It carries out the reaction L-threonylcarbamoyladenylate + adenosine(37) in tRNA = N(6)-L-threonylcarbamoyladenosine(37) in tRNA + AMP + H(+). In terms of biological role, required for the formation of a threonylcarbamoyl group on adenosine at position 37 (t(6)A37) in tRNAs that read codons beginning with adenine. Is involved in the transfer of the threonylcarbamoyl moiety of threonylcarbamoyl-AMP (TC-AMP) to the N6 group of A37, together with TsaE and TsaB. TsaD likely plays a direct catalytic role in this reaction. In Prochlorococcus marinus (strain NATL1A), this protein is tRNA N6-adenosine threonylcarbamoyltransferase.